A 256-amino-acid polypeptide reads, in one-letter code: Small ribosomal subunit protein eS1 (256 aa).

Residues Met1–Lys18 show a composition bias toward basic residues. The segment at Met1–Ala20 is disordered. Position 2 is an N-acetylalanine; partial (Ala2).

This sequence belongs to the eukaryotic ribosomal protein eS1 family. Component of the small ribosomal subunit. Mature ribosomes consist of a small (40S) and a large (60S) subunit. The 40S subunit contains about 33 different proteins and 1 molecule of RNA (18S). The 60S subunit contains about 49 different proteins and 3 molecules of RNA (25S, 5.8S and 5S).

It localises to the cytoplasm. The sequence is that of Small ribosomal subunit protein eS1 from Podospora anserina (strain S / ATCC MYA-4624 / DSM 980 / FGSC 10383) (Pleurage anserina).